The sequence spans 573 residues: Arylsulfatase I (573 aa).

Positions 1-23 (MHALSGFSLVSLLSLGYLSWDWA) are cleaved as a signal peptide. 3 residues coordinate Ca(2+): Asp-55, Asp-56, and Cys-93. Cys-93 functions as the Nucleophile in the catalytic mechanism. At Cys-93 the chain carries 3-oxoalanine (Cys). Lys-147 lines the substrate pocket. His-149 is an active-site residue. His-239 is a substrate binding site. N-linked (GlcNAc...) asparagine glycans are attached at residues Asn-276 and Asn-288. Ca(2+) contacts are provided by Asp-297 and Asn-298. Lys-315 contributes to the substrate binding site. Asn-466 and Asn-496 each carry an N-linked (GlcNAc...) asparagine glycan. A disordered region spans residues 506–550 (AANPRAHPDFNGGAWGPWASDEDEEEEDEEEEGRARSFPRGRRKK). Positions 525–537 (SDEDEEEEDEEEE) are enriched in acidic residues.

The protein belongs to the sulfatase family. The cofactor is Ca(2+). The oxidation of Cys-93 residue to 3-oxoalanine (also known as C(alpha)-formylglycine) by SUMF1/Sulfatase-modifying factor 1, seems critical for catalytic activity.

The protein localises to the secreted. The protein resides in the endoplasmic reticulum. Its function is as follows. Displays arylsulfatase activity at neutral pH, when co-expressed with SUMF1; arylsulfatase activity is measured in the secretion medium of retinal cell line, but no activity is recorded when measured in cell extracts. The chain is Arylsulfatase I (Arsi) from Rattus norvegicus (Rat).